Here is a 411-residue protein sequence, read N- to C-terminus: Citrate synthase (411 aa).

Catalysis depends on residues His-304 and Asp-363.

The protein belongs to the citrate synthase family.

The enzyme catalyses oxaloacetate + acetyl-CoA + H2O = citrate + CoA + H(+). The protein operates within carbohydrate metabolism; tricarboxylic acid cycle; isocitrate from oxaloacetate: step 1/2. The polypeptide is Citrate synthase (gltA) (Rickettsia massiliae).